We begin with the raw amino-acid sequence, 421 residues long: RNase J-like protein (421 aa).

The Zn(2+) site is built by H55, H57, D59, H60, H132, D153, and H389.

The protein belongs to the metallo-beta-lactamase superfamily. RNA-metabolizing metallo-beta-lactamase-like family. In terms of assembly, forms homodimers on heating to 60 degrees Celsius which may be the active form. It depends on Zn(2+) as a cofactor.

Its activity is regulated as follows. Inhibited by imidazole. Functionally, a 5'-3' exoribonuclease with a strong reference for 5'-monophosphorylated RNA and no endoribonuclease activty. In Methanocaldococcus jannaschii (strain ATCC 43067 / DSM 2661 / JAL-1 / JCM 10045 / NBRC 100440) (Methanococcus jannaschii), this protein is RNase J-like protein.